The chain runs to 343 residues: Anthranilate phosphoribosyltransferase (343 aa).

5-phospho-alpha-D-ribose 1-diphosphate is bound by residues G84, 87–88 (GD), T92, 94–97 (NIST), 112–120 (KHGNRGVSS), and S124. G84 contacts anthranilate. S96 contacts Mg(2+). Residue N115 coordinates anthranilate. R170 contacts anthranilate. Mg(2+) is bound by residues D229 and E230.

It belongs to the anthranilate phosphoribosyltransferase family. In terms of assembly, homodimer. It depends on Mg(2+) as a cofactor.

It catalyses the reaction N-(5-phospho-beta-D-ribosyl)anthranilate + diphosphate = 5-phospho-alpha-D-ribose 1-diphosphate + anthranilate. It functions in the pathway amino-acid biosynthesis; L-tryptophan biosynthesis; L-tryptophan from chorismate: step 2/5. Functionally, catalyzes the transfer of the phosphoribosyl group of 5-phosphorylribose-1-pyrophosphate (PRPP) to anthranilate to yield N-(5'-phosphoribosyl)-anthranilate (PRA). The polypeptide is Anthranilate phosphoribosyltransferase (Burkholderia multivorans (strain ATCC 17616 / 249)).